Reading from the N-terminus, the 500-residue chain is L-arabinose isomerase (500 aa).

4 residues coordinate Mn(2+): Glu306, Glu333, His350, and His450.

This sequence belongs to the arabinose isomerase family. In terms of assembly, homohexamer. Mn(2+) serves as cofactor.

It catalyses the reaction beta-L-arabinopyranose = L-ribulose. The protein operates within carbohydrate degradation; L-arabinose degradation via L-ribulose; D-xylulose 5-phosphate from L-arabinose (bacterial route): step 1/3. Its function is as follows. Catalyzes the conversion of L-arabinose to L-ribulose. This is L-arabinose isomerase (araA) from Escherichia coli (strain K12).